Reading from the N-terminus, the 217-residue chain is Cysteine-rich protein 3 (217 aa).

One can recognise an LIM zinc-binding 1 domain in the interval 3-64 (WTCPRCQQPV…KPCYGALFGP (62 aa)). Residues 84–112 (PGCTTPLSPSSFSPPRPRTGLPQGKKSPP) form a disordered region. An LIM zinc-binding 2 domain is found at 122–183 (SLCPGCGEPV…VPCYGYLFGP (62 aa)).

As to expression, expressed in most tissues, but not in skeletal muscle.

Its subcellular location is the cytoplasm. This chain is Cysteine-rich protein 3 (CRIP3), found in Homo sapiens (Human).